An 865-amino-acid chain; its full sequence is DNA mismatch repair protein MutS (865 aa).

Residue 605–612 (GPNMAGKS) participates in ATP binding. Residues 814–833 (PEPLEAYKPKGNKQPLSDEE) form a disordered region.

Belongs to the DNA mismatch repair MutS family.

Its function is as follows. This protein is involved in the repair of mismatches in DNA. It is possible that it carries out the mismatch recognition step. This protein has a weak ATPase activity. The polypeptide is DNA mismatch repair protein MutS (Halalkalibacterium halodurans (strain ATCC BAA-125 / DSM 18197 / FERM 7344 / JCM 9153 / C-125) (Bacillus halodurans)).